The chain runs to 539 residues: Phosphoenolpyruvate carboxykinase (ATP) (539 aa).

Substrate contacts are provided by arginine 64, tyrosine 206, and lysine 212. ATP contacts are provided by residues lysine 212, histidine 231, and 247–255 (GLSGTGKTT). Lysine 212 and histidine 231 together coordinate Mn(2+). Position 268 (aspartate 268) interacts with Mn(2+). ATP-binding positions include glutamate 296, arginine 332, 448-449 (RI), and threonine 454. Arginine 332 is a substrate binding site.

Belongs to the phosphoenolpyruvate carboxykinase (ATP) family. Monomer. The cofactor is Mn(2+).

Its subcellular location is the cytoplasm. The enzyme catalyses oxaloacetate + ATP = phosphoenolpyruvate + ADP + CO2. Its pathway is carbohydrate biosynthesis; gluconeogenesis. Its function is as follows. Involved in the gluconeogenesis. Catalyzes the conversion of oxaloacetate (OAA) to phosphoenolpyruvate (PEP) through direct phosphoryl transfer between the nucleoside triphosphate and OAA. The sequence is that of Phosphoenolpyruvate carboxykinase (ATP) from Cronobacter sakazakii (strain ATCC BAA-894) (Enterobacter sakazakii).